The following is a 90-amino-acid chain: Molybdopterin synthase sulfur carrier subunit (90 aa).

Position 90 is a 1-thioglycine; alternate (glycine 90). Glycine 90 carries the post-translational modification Glycyl adenylate; alternate.

It belongs to the MoaD family. MOCS2A subfamily. As to quaternary structure, heterotetramer; composed of 2 small (Mocs2A) and 2 large (Mocs2B) subunits. In terms of processing, C-terminal thiocarboxylation occurs in 2 steps, it is first acyl-adenylated (-COAMP) via the hesA/moeB/thiF part of MOCS3, then thiocarboxylated (-COSH) via the rhodanese domain of MOCS3.

Its subcellular location is the cytoplasm. It participates in cofactor biosynthesis; molybdopterin biosynthesis. Its function is as follows. Acts as a sulfur carrier required for molybdopterin biosynthesis. Component of the molybdopterin synthase complex that catalyzes the conversion of precursor Z into molybdopterin by mediating the incorporation of 2 sulfur atoms into precursor Z to generate a dithiolene group. In the complex, serves as sulfur donor by being thiocarboxylated (-COSH) at its C-terminus by MOCS3. After interaction with Mocs2B, the sulfur is then transferred to precursor Z to form molybdopterin. The chain is Molybdopterin synthase sulfur carrier subunit from Drosophila ananassae (Fruit fly).